Consider the following 132-residue polypeptide: ATP synthase epsilon chain (132 aa).

It belongs to the ATPase epsilon chain family. F-type ATPases have 2 components, CF(1) - the catalytic core - and CF(0) - the membrane proton channel. CF(1) has five subunits: alpha(3), beta(3), gamma(1), delta(1), epsilon(1). CF(0) has three main subunits: a, b and c.

It is found in the cell membrane. Its function is as follows. Produces ATP from ADP in the presence of a proton gradient across the membrane. This is ATP synthase epsilon chain (atpC) from Bacillus caldotenax.